The primary structure comprises 241 residues: Small ribosomal subunit protein uS2 (241 aa).

This sequence belongs to the universal ribosomal protein uS2 family.

The chain is Small ribosomal subunit protein uS2 from Yersinia pestis bv. Antiqua (strain Antiqua).